A 410-amino-acid polypeptide reads, in one-letter code: Argininosuccinate synthase (410 aa).

Position 10 to 18 (10 to 18 (AYSGGLDTS)) interacts with ATP. L-citrulline-binding residues include Tyr88 and Ser93. An ATP-binding site is contributed by Gly118. The L-aspartate site is built by Thr120, Asn124, and Asp125. Asn124 contacts L-citrulline. Arg128, Ser177, Ser186, Glu262, and Tyr274 together coordinate L-citrulline.

The protein belongs to the argininosuccinate synthase family. Type 1 subfamily. Homotetramer.

It is found in the cytoplasm. The enzyme catalyses L-citrulline + L-aspartate + ATP = 2-(N(omega)-L-arginino)succinate + AMP + diphosphate + H(+). It functions in the pathway amino-acid biosynthesis; L-arginine biosynthesis; L-arginine from L-ornithine and carbamoyl phosphate: step 2/3. The sequence is that of Argininosuccinate synthase from Caldanaerobacter subterraneus subsp. tengcongensis (strain DSM 15242 / JCM 11007 / NBRC 100824 / MB4) (Thermoanaerobacter tengcongensis).